Consider the following 522-residue polypeptide: F-box only protein 7 (522 aa).

Disordered regions lie at residues 1 to 20 (MKLR…PESE) and 85 to 128 (PNLP…HGQV). The ubiquitin-like stretch occupies residues 1–88 (MKLRVRLQKR…EDEMPAPNLP (88 aa)). Residues 87-114 (LPSSTDSEHSSLQNNDQPPLAATSSQAN) show a composition bias toward polar residues. Residues 92–129 (DSEHSSLQNNDQPPLAATSSQANIPDEQGSDSSHGQVT) form an important for interaction with PINK1 region. The segment at 129–169 (TQYDAWTDDSMEGPSHSAEAVSIQDAMSVEEASGFHPLEPM) is important for interaction with CDK6. The segment at 180–324 (PHSLEALYQS…PLLAFTRQVL (145 aa)) is important for dimerization and interaction with PSMF1. An F-box domain is found at 329-375 (VFGLVVLPLELKLRIFRLLDVHSVLALSAVCHDLLIASNDPLLWRCL). The segment at 381-522 (RDSTIRGPDT…RSADNRLPYL (142 aa)) is important for interaction with CDK6. Residues Arg-431 and Arg-451 each carry the omega-N-methylarginine modification. The tract at residues 459–522 (DPVTSLIPRP…RSADNRLPYL (64 aa)) is disordered. An RFDP motif motif is present at residues 481–484 (RFDP). Asymmetric dimethylarginine is present on Arg-518.

As to quaternary structure, part of the SCF (SKP1-CUL1-F-box) E3 ubiquitin-protein ligase complex SCF(FBXO7) formed of CUL1, SKP1, RBX1 and FBXO7. Interacts via its C-terminal proline-rich region with DLGAP5. Interacts with BIRC2. Interacts with CDK6 and promotes its interaction with D-type cyclin. Interacts (via the N-terminal Ubl domain) with PRKN. Interacts (via N-terminal region) with PINK1. Interacts with PSMF1.

The protein localises to the cytoplasm. Its subcellular location is the nucleus. It localises to the mitochondrion. It is found in the cytosol. The protein operates within protein modification; protein ubiquitination. Substrate recognition component of a SCF (SKP1-CUL1-F-box protein) E3 ubiquitin-protein ligase complex which mediates the ubiquitination and subsequent proteasomal degradation of target proteins and plays a role in several biological processes such as cell cycle, cell proliferation, or maintenance of chromosome stability. Recognizes and ubiquitinates BIRC2 and the cell cycle regulator DLGAP5. Plays a role downstream of PINK1 in the clearance of damaged mitochondria via selective autophagy (mitophagy) by targeting PRKN to dysfunctional depolarized mitochondria. Promotes MFN1 ubiquitination. Mediates the ubiquitination and proteasomal degradation of UXT isoform 2, thereby impairing the NF-kappa-B signaling pathway. Inhibits NF-kappa-B pathway also by promoting the ubiquitinatioin of TRAF2. Affects the assembly state and activity of the proteasome in the cells including neurons by ubiquitinating the proteasomal subunit PSMA2 via 'Lys-63'-linked polyubiquitin chains. Promotes 'Lys-48'-linked polyubiquitination SIRT7, leading to the hydrogen peroxide-induced cell death. This is F-box only protein 7 (Fbxo7) from Rattus norvegicus (Rat).